We begin with the raw amino-acid sequence, 210 residues long: Orotate phosphoribosyltransferase (210 aa).

A 5-phospho-alpha-D-ribose 1-diphosphate-binding site is contributed by K26. Residue 34–35 (FF) coordinates orotate. 5-phospho-alpha-D-ribose 1-diphosphate is bound by residues 72–73 (YK), R98, K99, K102, H104, and 123–131 (DDVITAGTA). Residues T127 and R155 each contribute to the orotate site.

This sequence belongs to the purine/pyrimidine phosphoribosyltransferase family. PyrE subfamily. As to quaternary structure, homodimer. Mg(2+) serves as cofactor.

The catalysed reaction is orotidine 5'-phosphate + diphosphate = orotate + 5-phospho-alpha-D-ribose 1-diphosphate. Its pathway is pyrimidine metabolism; UMP biosynthesis via de novo pathway; UMP from orotate: step 1/2. Its function is as follows. Catalyzes the transfer of a ribosyl phosphate group from 5-phosphoribose 1-diphosphate to orotate, leading to the formation of orotidine monophosphate (OMP). The chain is Orotate phosphoribosyltransferase from Legionella pneumophila (strain Paris).